Reading from the N-terminus, the 424-residue chain is Dihydroorotase (424 aa).

The Zn(2+) site is built by His61 and His63. Residues 63 to 65 (HLR) and Asn95 each bind substrate. Residues Asp153, His180, and His233 each contribute to the Zn(2+) site. Substrate is bound at residue Asn279. Asp306 is a binding site for Zn(2+). Asp306 is a catalytic residue. His310 is a binding site for substrate.

It belongs to the metallo-dependent hydrolases superfamily. DHOase family. Class I DHOase subfamily. Zn(2+) serves as cofactor.

The catalysed reaction is (S)-dihydroorotate + H2O = N-carbamoyl-L-aspartate + H(+). It functions in the pathway pyrimidine metabolism; UMP biosynthesis via de novo pathway; (S)-dihydroorotate from bicarbonate: step 3/3. Functionally, catalyzes the reversible cyclization of carbamoyl aspartate to dihydroorotate. The sequence is that of Dihydroorotase from Pelobacter propionicus (strain DSM 2379 / NBRC 103807 / OttBd1).